The sequence spans 162 residues: MRISKPHLRSISIQCYLCLLLNSHFLTEAGIHVFILGCFSAGLPKTEANWVNVISDLKKIEDLIQSMHIDATLYTESDVHPSCKVTAMKCFLLELQVISLESGDASIHDTVENLIILANNSLSSNGNVTESGCKECEELEEKNIKEFLQSFVHIVQMFINTS.

Positions 1 to 29 are cleaved as a signal peptide; that stretch reads MRISKPHLRSISIQCYLCLLLNSHFLTEA. A propeptide spanning residues 30-48 is cleaved from the precursor; the sequence is GIHVFILGCFSAGLPKTEA. 2 disulfide bridges follow: C83/C133 and C90/C136. N127 carries an N-linked (GlcNAc...) asparagine glycan.

It belongs to the IL-15/IL-21 family. In terms of tissue distribution, most abundant in placenta and skeletal muscle. It is also detected in the heart, lung, liver and kidney. IL15-S21AA is preferentially expressed in tissues such as testis and thymus.

The protein resides in the secreted. The protein localises to the cytoplasm. It localises to the nucleus. Functionally, cytokine that plays a major role in the development of inflammatory and protective immune responses to microbial invaders and parasites by modulating immune cells of both the innate and adaptive immune systems. Stimulates the proliferation of natural killer cells, T-cells and B-cells and promotes the secretion of several cytokines. In monocytes, induces the production of IL8 and monocyte chemotactic protein 1/CCL2, two chemokines that attract neutrophils and monocytes respectively to sites of infection. Unlike most cytokines, which are secreted in soluble form, IL15 is expressed in association with its high affinity IL15RA on the surface of IL15-producing cells and delivers signals to target cells that express IL2RB and IL2RG receptor subunits. Binding to its receptor triggers the phosphorylation of JAK1 and JAK3 and the recruitment and subsequent phosphorylation of signal transducer and activator of transcription-3/STAT3 and STAT5. In mast cells, induces the rapid tyrosine phosphorylation of STAT6 and thereby controls mast cell survival and release of cytokines such as IL4. The polypeptide is Interleukin-15 (IL15) (Homo sapiens (Human)).